The chain runs to 445 residues: Squalene synthase (445 aa).

Helical transmembrane passes span 291 to 311 (STFT…DLVY) and 405 to 425 (LIVC…IAYV).

It belongs to the phytoene/squalene synthase family. Mg(2+) serves as cofactor.

The protein resides in the endoplasmic reticulum membrane. It catalyses the reaction 2 (2E,6E)-farnesyl diphosphate + NADPH + H(+) = squalene + 2 diphosphate + NADP(+). The enzyme catalyses 2 (2E,6E)-farnesyl diphosphate + NADH + H(+) = squalene + 2 diphosphate + NAD(+). Its pathway is terpene metabolism; lanosterol biosynthesis; lanosterol from farnesyl diphosphate: step 1/3. Functionally, catalyzes the condensation of 2 two farnesyl pyrophosphate moieties to form squalene. It is the first committed enzyme of the sterol biosynthesis pathway. Required for the biosynthesis of ergosterol. This chain is Squalene synthase (SQS1), found in Yarrowia lipolytica (strain CLIB 122 / E 150) (Yeast).